We begin with the raw amino-acid sequence, 206 residues long: MKTFKFFTALFATAILTACTLDMERPTNVQYIDKTDVIWQQHLQKIQKIQSYQAKGQIGYISPTERFSSRFEWQYQNPKSYTLKLYSLISKSTLWIQMHQSGMTISDNNGNQQSAANAKLLLQEIIGMDVPLEHLAYWLKGQPAMNADYQVGTNHLLGAFTYHVDGSQWTADYLTYHSNNSMPENILLKNDSTKQTLKIRVDEWIY.

The first 18 residues, 1–18, serve as a signal peptide directing secretion; sequence MKTFKFFTALFATAILTA. Cysteine 19 carries N-palmitoyl cysteine lipidation. Cysteine 19 is lipidated: S-diacylglycerol cysteine.

The protein belongs to the LolB family. In terms of assembly, monomer.

The protein resides in the cell outer membrane. Plays a critical role in the incorporation of lipoproteins in the outer membrane after they are released by the LolA protein. The polypeptide is Outer-membrane lipoprotein LolB (Haemophilus influenzae (strain PittGG)).